We begin with the raw amino-acid sequence, 178 residues long: GTP-dependent dephospho-CoA kinase (178 aa).

Residues D43, I44, V45, D62, K64, and E120 each contribute to the GTP site.

The protein belongs to the GTP-dependent DPCK family.

The catalysed reaction is 3'-dephospho-CoA + GTP = GDP + CoA + H(+). It participates in cofactor biosynthesis; coenzyme A biosynthesis. Its function is as follows. Catalyzes the GTP-dependent phosphorylation of the 3'-hydroxyl group of dephosphocoenzyme A to form coenzyme A (CoA). This is GTP-dependent dephospho-CoA kinase from Natronomonas pharaonis (strain ATCC 35678 / DSM 2160 / CIP 103997 / JCM 8858 / NBRC 14720 / NCIMB 2260 / Gabara) (Halobacterium pharaonis).